Here is a 204-residue protein sequence, read N- to C-terminus: Neurensin-2 (204 aa).

2 helical membrane-spanning segments follow: residues 66 to 86 (LSSG…GYAV) and 122 to 142 (LCVA…IGWL). Residues 178–204 (SGQSWFSPPASPFGQSSVQTIQPKRDS) are disordered. A compositionally biased stretch (polar residues) spans 190–204 (FGQSSVQTIQPKRDS).

This sequence belongs to the VMP family.

Its subcellular location is the membrane. Its function is as follows. May play a role in maintenance and/or transport of vesicles. This Homo sapiens (Human) protein is Neurensin-2 (NRSN2).